Here is a 368-residue protein sequence, read N- to C-terminus: 2-aminoethylphosphonate--pyruvate transaminase (368 aa).

Lysine 192 carries the post-translational modification N6-(pyridoxal phosphate)lysine.

The protein belongs to the class-V pyridoxal-phosphate-dependent aminotransferase family. PhnW subfamily. Homodimer. Pyridoxal 5'-phosphate serves as cofactor.

The catalysed reaction is (2-aminoethyl)phosphonate + pyruvate = phosphonoacetaldehyde + L-alanine. Involved in phosphonate degradation. The chain is 2-aminoethylphosphonate--pyruvate transaminase from Pseudomonas putida (strain ATCC 700007 / DSM 6899 / JCM 31910 / BCRC 17059 / LMG 24140 / F1).